Reading from the N-terminus, the 397-residue chain is LIM/homeobox protein Lhx3 (397 aa).

LIM zinc-binding domains are found at residues 31–81 and 90–144; these read CAGC…CKDD and CAAC…CKAD. T63 is modified (phosphothreonine). S71 is subject to Phosphoserine. The homeobox DNA-binding region spans 157-216; that stretch reads AKRPRTTITAKQLETLKSAYNTSPKPARHVREQLSSETGLDMRVVQVWFQNRRAKEKRLK. Positions 212–397 are disordered; it reads EKRLKKDAGR…WLDEVDHAQF (186 aa). A Phosphotyrosine modification is found at Y227. A phosphoserine mark is found at S234 and S238. Pro residues predominate over residues 316 to 331; the sequence is GVPPSPAAPQSLPGPQ.

In terms of assembly, interacts with POU1F1. At neuronal promoters, interacts with LDB1, in motor neurons LDB1 is displaced by ISL1 and a ternary complex is formed in which ISL1 contacts both LHX3 and LDB1; allosteric structural changes in the DNA binding domain of LHX3, induced by the ISL1-LHX3 interaction, may explain differences in sequence specificity of the different complexes. Interacts with LDB2. May interact with CITED2/MRG1.

The protein localises to the nucleus. In terms of biological role, transcription factor. Recognizes and binds to the consensus sequence motif 5'-AATTAATTA-3' in the regulatory elements of target genes, such as glycoprotein hormones alpha chain CGA and visual system homeobox CHX10, positively modulating transcription; transcription can be co-activated by LDB2. Synergistically enhances transcription from the prolactin promoter in cooperation with POU1F1/Pit-1. Required for the establishment of the specialized cells of the pituitary gland and the nervous system. Involved in the development of interneurons and motor neurons in cooperation with LDB1 and ISL1. The chain is LIM/homeobox protein Lhx3 (LHX3) from Homo sapiens (Human).